The primary structure comprises 193 residues: Ion-translocating oxidoreductase complex subunit B (193 aa).

The tract at residues 1–26 (MSTMLIAVILLTLLALFFGVLLGFAA) is hydrophobic. The 4Fe-4S domain occupies 32–90 (EGNPIVDELEAILPQTQCGQCGYPGCRPYAEAIANGDKVNKCPPGGTATMEKLASLMGV). [4Fe-4S] cluster-binding residues include Cys49, Cys52, Cys57, Cys73, Cys114, Cys117, Cys120, Cys124, Cys144, Cys147, Cys150, and Cys154. 4Fe-4S ferredoxin-type domains follow at residues 105-134 (KVAYIREDECIGCTKCIQACPVDAIIGAGK) and 136-164 (MHTVLTADCTGCDLCVEPCPVDCIDMLPV).

This sequence belongs to the 4Fe4S bacterial-type ferredoxin family. RnfB subfamily. In terms of assembly, the complex is composed of six subunits: RnfA, RnfB, RnfC, RnfD, RnfE and RnfG. The cofactor is [4Fe-4S] cluster.

Its subcellular location is the cell inner membrane. In terms of biological role, part of a membrane-bound complex that couples electron transfer with translocation of ions across the membrane. The chain is Ion-translocating oxidoreductase complex subunit B from Shewanella sp. (strain MR-4).